The sequence spans 937 residues: Glycine dehydrogenase (decarboxylating) (937 aa).

N6-(pyridoxal phosphate)lysine is present on Lys-686.

The protein belongs to the GcvP family. In terms of assembly, the glycine cleavage system is composed of four proteins: P, T, L and H. Pyridoxal 5'-phosphate serves as cofactor.

The enzyme catalyses N(6)-[(R)-lipoyl]-L-lysyl-[glycine-cleavage complex H protein] + glycine + H(+) = N(6)-[(R)-S(8)-aminomethyldihydrolipoyl]-L-lysyl-[glycine-cleavage complex H protein] + CO2. The glycine cleavage system catalyzes the degradation of glycine. The P protein binds the alpha-amino group of glycine through its pyridoxal phosphate cofactor; CO(2) is released and the remaining methylamine moiety is then transferred to the lipoamide cofactor of the H protein. This chain is Glycine dehydrogenase (decarboxylating), found in Mesorhizobium japonicum (strain LMG 29417 / CECT 9101 / MAFF 303099) (Mesorhizobium loti (strain MAFF 303099)).